The primary structure comprises 137 residues: MSYNCSSGNFSSCCFGSYLRYPVSTYNLFYPSNAIYSPNTCQLGSSLYNGCQETYCEPTSCQTSCTLARSYQTSCYCPKNSIFCSPRQTNYIRSLGCGNTGLGSLGCGSTGFQSLDCGSSFYHPTTFSSRNFQATCY.

Belongs to the PMG family. Interacts with hair keratins.

Its function is as follows. In the hair cortex, hair keratin intermediate filaments are embedded in an interfilamentous matrix, consisting of hair keratin-associated proteins (KRTAP), which are essential for the formation of a rigid and resistant hair shaft through their extensive disulfide bond cross-linking with abundant cysteine residues of hair keratins. The matrix proteins include the high-sulfur and high-glycine-tyrosine keratins. The protein is Keratin-associated protein 15-1 (KRTAP15-1) of Homo sapiens (Human).